The following is a 649-amino-acid chain: 70 kDa protein (649 aa).

Disordered regions lie at residues 28-80 (LRRG…DFSP), 257-286 (ALSL…AASD), 311-359 (TATS…SKQQ), and 458-550 (QSAE…PSSL). The segment covering 268–279 (KSTSPCNNSQLP) has biased composition (polar residues). Basic residues predominate over residues 330–349 (RLQRSLHLHSRSPHSSHFRP). Over residues 504-515 (DVSNSETKNCPS) the composition is skewed to polar residues. Composition is skewed to low complexity over residues 524–533 (PNHLHPLLPG) and 540–550 (PRQLSPSPSSL).

The protein belongs to the tymoviridae protein p69 family.

This Solanum lycopersicum (Tomato) protein is 70 kDa protein.